Consider the following 237-residue polypeptide: Leucyl/phenylalanyl-tRNA--protein transferase (237 aa).

The protein belongs to the L/F-transferase family.

Its subcellular location is the cytoplasm. It catalyses the reaction N-terminal L-lysyl-[protein] + L-leucyl-tRNA(Leu) = N-terminal L-leucyl-L-lysyl-[protein] + tRNA(Leu) + H(+). The enzyme catalyses N-terminal L-arginyl-[protein] + L-leucyl-tRNA(Leu) = N-terminal L-leucyl-L-arginyl-[protein] + tRNA(Leu) + H(+). The catalysed reaction is L-phenylalanyl-tRNA(Phe) + an N-terminal L-alpha-aminoacyl-[protein] = an N-terminal L-phenylalanyl-L-alpha-aminoacyl-[protein] + tRNA(Phe). In terms of biological role, functions in the N-end rule pathway of protein degradation where it conjugates Leu, Phe and, less efficiently, Met from aminoacyl-tRNAs to the N-termini of proteins containing an N-terminal arginine or lysine. This is Leucyl/phenylalanyl-tRNA--protein transferase from Photobacterium profundum (strain SS9).